A 102-amino-acid polypeptide reads, in one-letter code: MQDNKMKKMLFSAALAMLITGCAQQTFTVGNKPTAVTPKETITHHFFVSPIGQRKLLMQPKFVGGAENVVKTETQQTFVNALPGFITFGIYTPRETRVYCSQ.

In terms of biological role, increases serum survival and confers group II surface exclusion. The chain is Protein iss (iss) from Escherichia coli.